A 197-amino-acid chain; its full sequence is Ribonuclease HII (197 aa).

Residues 9–197 (ELIAGVDEVG…APVKKALEQF (189 aa)) enclose the RNase H type-2 domain. A divalent metal cation is bound by residues D15, E16, and D107.

The protein belongs to the RNase HII family. It depends on Mn(2+) as a cofactor. Requires Mg(2+) as cofactor.

The protein localises to the cytoplasm. The catalysed reaction is Endonucleolytic cleavage to 5'-phosphomonoester.. Its function is as follows. Endonuclease that specifically degrades the RNA of RNA-DNA hybrids. In Haemophilus influenzae (strain PittGG), this protein is Ribonuclease HII.